The following is a 331-amino-acid chain: UDP-GalNAc:beta-1,3-N-acetylgalactosaminyltransferase 1 (331 aa).

Residues 1–20 (MAPAVLTAIPNRMSLRSLKW) are Cytoplasmic-facing. A helical; Signal-anchor for type II membrane protein membrane pass occupies residues 21 to 43 (SLLLLSLLSFLVIWYLSLPHYNV). Over 44-331 (IERVNWMYFY…VMLRNTTCHY (288 aa)) the chain is Lumenal. N-linked (GlcNAc...) asparagine glycans are attached at residues N72, N154, N198, N212, and N326.

Belongs to the glycosyltransferase 31 family. Mg(2+) is required as a cofactor.

The protein resides in the golgi apparatus membrane. The enzyme catalyses a globoside Gb3Cer (d18:1(4E)) + UDP-N-acetyl-alpha-D-galactosamine = a globoside Gb4Cer (d18:1(4E)) + UDP + H(+). The protein operates within protein modification; protein glycosylation. Transfers N-acetylgalactosamine onto globotriaosylceramide. Plays a critical role in preimplantation stage embryonic development. This Rattus norvegicus (Rat) protein is UDP-GalNAc:beta-1,3-N-acetylgalactosaminyltransferase 1 (B3galnt1).